The primary structure comprises 293 residues: Formamidopyrimidine-DNA glycosylase (293 aa).

Residue Pro2 is the Schiff-base intermediate with DNA of the active site. Residue Glu3 is the Proton donor of the active site. The Proton donor; for beta-elimination activity role is filled by Lys61. Positions 104, 123, and 169 each coordinate DNA. The FPG-type zinc finger occupies 255 to 289 (DAYGREGEPCRRCGAIMRRDKFMNRSSFYCPRCQP). Catalysis depends on Arg279, which acts as the Proton donor; for delta-elimination activity.

The protein belongs to the FPG family. As to quaternary structure, monomer. Zn(2+) serves as cofactor.

It carries out the reaction Hydrolysis of DNA containing ring-opened 7-methylguanine residues, releasing 2,6-diamino-4-hydroxy-5-(N-methyl)formamidopyrimidine.. The catalysed reaction is 2'-deoxyribonucleotide-(2'-deoxyribose 5'-phosphate)-2'-deoxyribonucleotide-DNA = a 3'-end 2'-deoxyribonucleotide-(2,3-dehydro-2,3-deoxyribose 5'-phosphate)-DNA + a 5'-end 5'-phospho-2'-deoxyribonucleoside-DNA + H(+). Its function is as follows. Involved in base excision repair of DNA damaged by oxidation or by mutagenic agents. Acts as a DNA glycosylase that recognizes and removes damaged bases. Has a preference for oxidized purines, such as 7,8-dihydro-8-oxoguanine (8-oxoG). Has AP (apurinic/apyrimidinic) lyase activity and introduces nicks in the DNA strand. Cleaves the DNA backbone by beta-delta elimination to generate a single-strand break at the site of the removed base with both 3'- and 5'-phosphates. In Mycolicibacterium vanbaalenii (strain DSM 7251 / JCM 13017 / BCRC 16820 / KCTC 9966 / NRRL B-24157 / PYR-1) (Mycobacterium vanbaalenii), this protein is Formamidopyrimidine-DNA glycosylase.